The primary structure comprises 156 residues: Ribosomal RNA large subunit methyltransferase H (156 aa).

S-adenosyl-L-methionine is bound by residues leucine 73, glycine 104, and 123–128 (LSALTL).

This sequence belongs to the RNA methyltransferase RlmH family. In terms of assembly, homodimer.

The protein localises to the cytoplasm. It carries out the reaction pseudouridine(1915) in 23S rRNA + S-adenosyl-L-methionine = N(3)-methylpseudouridine(1915) in 23S rRNA + S-adenosyl-L-homocysteine + H(+). In terms of biological role, specifically methylates the pseudouridine at position 1915 (m3Psi1915) in 23S rRNA. The polypeptide is Ribosomal RNA large subunit methyltransferase H (Shewanella denitrificans (strain OS217 / ATCC BAA-1090 / DSM 15013)).